Consider the following 395-residue polypeptide: Chalcone synthase (395 aa).

C164 is an active-site residue.

The protein belongs to the thiolase-like superfamily. Chalcone/stilbene synthases family.

The enzyme catalyses (E)-4-coumaroyl-CoA + 3 malonyl-CoA + 3 H(+) = 2',4,4',6'-tetrahydroxychalcone + 3 CO2 + 4 CoA. It participates in secondary metabolite biosynthesis; flavonoid biosynthesis. In terms of biological role, the primary product of this enzyme is 4,2',4',6'-tetrahydroxychalcone (also termed naringenin-chalcone or chalcone) which can under specific conditions spontaneously isomerize into naringenin. This chain is Chalcone synthase (CHS), found in Betula pendula (European white birch).